Reading from the N-terminus, the 385-residue chain is Multidrug resistance protein MdtE (385 aa).

The signal sequence occupies residues 1–20 (MNRRRKLLIPLLFCGAMLTA). Cysteine 21 carries N-palmitoyl cysteine lipidation. Cysteine 21 is lipidated: S-diacylglycerol cysteine.

The protein belongs to the membrane fusion protein (MFP) (TC 8.A.1) family. In terms of assembly, homotrimer. Part of the tripartite efflux system MdtEF-TolC, which is composed of an inner membrane transporter, MdtF, a membrane fusion protein, MdtE, and an outer membrane component, TolC. The complex forms a large protein conduit and can translocate molecules across both the inner and outer membranes.

Its subcellular location is the cell inner membrane. In terms of biological role, part of the tripartite efflux system MdtEF-TolC, which confers resistance to various compounds. The sequence is that of Multidrug resistance protein MdtE (mdtE) from Escherichia coli O6:H1 (strain CFT073 / ATCC 700928 / UPEC).